Here is a 196-residue protein sequence, read N- to C-terminus: HTH-type transcriptional regulator BetI (196 aa).

Residues 8–68 (PIRRSQLIAA…ATMRHLMQAL (61 aa)) form the HTH tetR-type domain. The H-T-H motif DNA-binding region spans 31 to 50 (SIAYIARLAGVSNGIISHYF).

It participates in amine and polyamine biosynthesis; betaine biosynthesis via choline pathway [regulation]. In terms of biological role, repressor involved in the biosynthesis of the osmoprotectant glycine betaine. It represses transcription of the choline transporter BetT and the genes of BetAB involved in the synthesis of glycine betaine. The chain is HTH-type transcriptional regulator BetI from Ectopseudomonas mendocina (strain ymp) (Pseudomonas mendocina).